The chain runs to 43 residues: uncharacterized protein (43 aa).

An N-terminal signal peptide occupies residues 1 to 22; sequence MKRKIIAIGIFFRLFIIHIHFS.

This is an uncharacterized protein from Schizosaccharomyces pombe (strain 972 / ATCC 24843) (Fission yeast).